Consider the following 346-residue polypeptide: Holliday junction branch migration complex subunit RuvB (346 aa).

Positions 1–11 (MTEQRTIASSA) are enriched in polar residues. The disordered stretch occupies residues 1 to 20 (MTEQRTIASSATREDEAADA). The large ATPase domain (RuvB-L) stretch occupies residues 1 to 183 (MTEQRTIASS…FGIVQRLEFY (183 aa)). Residues Ile22, Arg23, Gly64, Lys67, Thr68, Thr69, 130 to 132 (EDF), Arg173, Tyr183, and Arg220 contribute to the ATP site. Position 68 (Thr68) interacts with Mg(2+). The interval 184–254 (SPQELTRIVI…VAQAAMQMLK (71 aa)) is small ATPAse domain (RuvB-S). Residues 257-346 (PEGFDELDRR…PAIGEPGDLF (90 aa)) are head domain (RuvB-H). Arg293, Arg312, and Arg317 together coordinate DNA.

This sequence belongs to the RuvB family. In terms of assembly, homohexamer. Forms an RuvA(8)-RuvB(12)-Holliday junction (HJ) complex. HJ DNA is sandwiched between 2 RuvA tetramers; dsDNA enters through RuvA and exits via RuvB. An RuvB hexamer assembles on each DNA strand where it exits the tetramer. Each RuvB hexamer is contacted by two RuvA subunits (via domain III) on 2 adjacent RuvB subunits; this complex drives branch migration. In the full resolvosome a probable DNA-RuvA(4)-RuvB(12)-RuvC(2) complex forms which resolves the HJ.

The protein localises to the cytoplasm. It catalyses the reaction ATP + H2O = ADP + phosphate + H(+). In terms of biological role, the RuvA-RuvB-RuvC complex processes Holliday junction (HJ) DNA during genetic recombination and DNA repair, while the RuvA-RuvB complex plays an important role in the rescue of blocked DNA replication forks via replication fork reversal (RFR). RuvA specifically binds to HJ cruciform DNA, conferring on it an open structure. The RuvB hexamer acts as an ATP-dependent pump, pulling dsDNA into and through the RuvAB complex. RuvB forms 2 homohexamers on either side of HJ DNA bound by 1 or 2 RuvA tetramers; 4 subunits per hexamer contact DNA at a time. Coordinated motions by a converter formed by DNA-disengaged RuvB subunits stimulates ATP hydrolysis and nucleotide exchange. Immobilization of the converter enables RuvB to convert the ATP-contained energy into a lever motion, pulling 2 nucleotides of DNA out of the RuvA tetramer per ATP hydrolyzed, thus driving DNA branch migration. The RuvB motors rotate together with the DNA substrate, which together with the progressing nucleotide cycle form the mechanistic basis for DNA recombination by continuous HJ branch migration. Branch migration allows RuvC to scan DNA until it finds its consensus sequence, where it cleaves and resolves cruciform DNA. This is Holliday junction branch migration complex subunit RuvB from Xanthomonas campestris pv. campestris (strain B100).